The chain runs to 272 residues: HMP-PP phosphatase (272 aa).

The active-site Nucleophile is Asp8. Mg(2+) contacts are provided by Asp8, Asp10, and Asp212.

Belongs to the HAD-like hydrolase superfamily. Cof family. Requires Mg(2+) as cofactor.

It carries out the reaction 4-amino-2-methyl-5-(diphosphooxymethyl)pyrimidine + H2O = 4-amino-2-methyl-5-(phosphooxymethyl)pyrimidine + phosphate + H(+). In terms of biological role, catalyzes the hydrolysis of 4-amino-2-methyl-5-hydroxymethylpyrimidine pyrophosphate (HMP-PP) to 4-amino-2-methyl-5-hydroxymethylpyrimidine phosphate (HMP-P). This is HMP-PP phosphatase from Escherichia coli (strain K12 / MC4100 / BW2952).